The following is a 347-amino-acid chain: Protein RecA (347 aa).

ATP is bound at residue 65–72 (GPESSGKT). Positions 327-336 (KFEPTELSRE) are enriched in basic and acidic residues. The interval 327 to 347 (KFEPTELSREEGDEDTLEDTM) is disordered. Over residues 337–347 (EGDEDTLEDTM) the composition is skewed to acidic residues.

This sequence belongs to the RecA family.

The protein resides in the cytoplasm. Functionally, can catalyze the hydrolysis of ATP in the presence of single-stranded DNA, the ATP-dependent uptake of single-stranded DNA by duplex DNA, and the ATP-dependent hybridization of homologous single-stranded DNAs. It interacts with LexA causing its activation and leading to its autocatalytic cleavage. The sequence is that of Protein RecA from Xylella fastidiosa (strain 9a5c).